Here is a 402-residue protein sequence, read N- to C-terminus: Leucine aminopeptidase 1 (402 aa).

An N-terminal signal peptide occupies residues methionine 1–alanine 18. A propeptide spanning residues arginine 19–lysine 92 is cleaved from the precursor. Asparagine 111 and asparagine 184 each carry an N-linked (GlcNAc...) asparagine glycan. Zn(2+) contacts are provided by histidine 192, aspartate 211, glutamate 250, and aspartate 277. Asparagine 304 carries an N-linked (GlcNAc...) asparagine glycan. Cysteine 326 and cysteine 330 are oxidised to a cystine. Histidine 359 contributes to the Zn(2+) binding site.

Belongs to the peptidase M28 family. M28E subfamily. In terms of assembly, monomer. It depends on Zn(2+) as a cofactor.

The protein localises to the secreted. Extracellular aminopeptidase that allows assimilation of proteinaceous substrates. The protein is Leucine aminopeptidase 1 (lap1) of Neurospora crassa (strain ATCC 24698 / 74-OR23-1A / CBS 708.71 / DSM 1257 / FGSC 987).